Consider the following 210-residue polypeptide: Tissue inhibitor of metalloproteinase (210 aa).

Residues 1–27 (MDLRKHLGLLTLLLVAVFAFYGRPADA) form the signal peptide. Cysteine 28 is a binding site for Zn(2+). 2 involved in metalloproteinase-binding regions span residues 28–31 (CSCM) and 93–94 (DA). 5 cysteine pairs are disulfide-bonded: cysteine 28/cysteine 96, cysteine 30/cysteine 118, cysteine 145/cysteine 195, cysteine 150/cysteine 155, and cysteine 165/cysteine 180. In terms of domain architecture, NTR spans 28 to 145 (CSCMPSHPQT…SGGYAKATNC (118 aa)).

The protein belongs to the protease inhibitor I35 (TIMP) family. As to expression, expressed in heads of female and male adult flies. Expressed at the time of eclosion in unopened wings of adult flies. Strongly expressed at the tip of ovarian germarium region 1 where germline stem cells (GSCs) and cystoblasts reside and in region 2 of the germarium.

It is found in the secreted. In terms of biological role, metalloproteinase inhibitor that acts on both matrix metalloproteinases Mmp1 and Mmp2 in vitro. Complexes with metalloproteinases and irreversibly inactivates them by binding to their catalytic zinc cofactor. Required for wing maturation which is the final step in morphogenesis of the adult fly. Involved in the negative regulation of developmental tissue invasion for imaginal disk eversion during metamorphosis by inhibiting Mmp-mediated basement membrane (BM) degradation. Required for oogenesis and for the long-term maintainance of germarial structure and shape in the adult ovaries. Required for maintaining composition and biophysical properties of the extracellular matrix (ECM), and for the normal organization and cyst production of the germline stem cell (GSC) niche. In Drosophila melanogaster (Fruit fly), this protein is Tissue inhibitor of metalloproteinase.